The following is a 505-amino-acid chain: Protein amnionless (505 aa).

Residues M1–A20 form the signal peptide. Topologically, residues T21–S344 are extracellular. Residues S345–A365 form a helical membrane-spanning segment. At H366–I505 the chain is on the cytoplasmic side. The segment at G451–V482 is disordered. Residues E473–V482 are compositionally biased toward basic and acidic residues.

Specifically expressed in nephrocytes.

The protein resides in the cell membrane. Its function is as follows. Required in the nephrocyte for normal uptake of proteins and elimination of toxins, and for maintenance of endocytic trafficking structures. May function together with Cubn. The protein is Protein amnionless of Drosophila melanogaster (Fruit fly).